A 605-amino-acid chain; its full sequence is Elongation factor 4 (605 aa).

The tr-type G domain occupies arginine 8–glutamine 190. GTP-binding positions include aspartate 20 to threonine 25 and asparagine 137 to aspartate 140.

Belongs to the TRAFAC class translation factor GTPase superfamily. Classic translation factor GTPase family. LepA subfamily.

Its subcellular location is the cell inner membrane. The catalysed reaction is GTP + H2O = GDP + phosphate + H(+). Required for accurate and efficient protein synthesis under certain stress conditions. May act as a fidelity factor of the translation reaction, by catalyzing a one-codon backward translocation of tRNAs on improperly translocated ribosomes. Back-translocation proceeds from a post-translocation (POST) complex to a pre-translocation (PRE) complex, thus giving elongation factor G a second chance to translocate the tRNAs correctly. Binds to ribosomes in a GTP-dependent manner. This chain is Elongation factor 4, found in Treponema pallidum (strain Nichols).